The primary structure comprises 434 residues: MSNFSPREIVSELDRFIIGQKDAKRAVAIALRNRWRRQQLEGQMREEVMPKNILMIGPTGVGKTEISRRLAKLAGAPFVKVEATKFTEVGYVGRDVEQIIRDLVEIAITLVREKRREDVKAKAHLNAEERVLDALVGKTASPATRDSFRKKLRNGEMDDKEIEIEVSDSGASPNFEIPGMPGANIGVLNISDMLGKAMGGRTKTRKTTVKDSYPILINDESDKLLDQDQIVQEALRVSEDEGIVFIDEIDKIAAREGGSGAGVSREGVQRDLLPLVEGTTVATKYGPVKTDHILFITSGAFHVSKPSDLLPELQGRLPIRVELSALTREDFRRILTETEASLIKQYIALMETEEVKLEFSDDAIDALADIAVDLNATVENIGARRLQTVMEKVLDEISFTAPDKAGATFIIDAAYVKEKIGGLAKNTDLSRFIL.

Residues Ile18, 60–65 (GVGKTE), Asp247, Glu312, and Arg384 each bind ATP.

The protein belongs to the ClpX chaperone family. HslU subfamily. In terms of assembly, a double ring-shaped homohexamer of HslV is capped on each side by a ring-shaped HslU homohexamer. The assembly of the HslU/HslV complex is dependent on binding of ATP.

It is found in the cytoplasm. Its function is as follows. ATPase subunit of a proteasome-like degradation complex; this subunit has chaperone activity. The binding of ATP and its subsequent hydrolysis by HslU are essential for unfolding of protein substrates subsequently hydrolyzed by HslV. HslU recognizes the N-terminal part of its protein substrates and unfolds these before they are guided to HslV for hydrolysis. In Brucella suis (strain ATCC 23445 / NCTC 10510), this protein is ATP-dependent protease ATPase subunit HslU.